A 161-amino-acid chain; its full sequence is Large ribosomal subunit protein bL9 (161 aa).

It belongs to the bacterial ribosomal protein bL9 family.

In terms of biological role, binds to the 23S rRNA. This is Large ribosomal subunit protein bL9 from Protochlamydia amoebophila (strain UWE25).